A 215-amino-acid chain; its full sequence is MOB kinase activator-like 1B (215 aa).

A disordered region spans residues 1-29 (MSLFGLGSRNQKTFRPKKSAPTGSKGAQL). Residues Cys-80, Cys-85, His-162, and His-167 each contribute to the Zn(2+) site.

It belongs to the MOB1/phocein family. Constitutively expressed with higher expression in roots, flowers and pods than in leaves and stems.

It localises to the cytoplasm. The protein resides in the cytoskeleton. Its subcellular location is the phragmoplast. This chain is MOB kinase activator-like 1B, found in Medicago sativa subsp. falcata (Sickle medic).